The following is a 178-amino-acid chain: Small ribosomal subunit protein uS5 (178 aa).

Residues 15–78 (FEEKIIEIRR…SAAKRNIVEV (64 aa)) enclose the S5 DRBM domain.

Belongs to the universal ribosomal protein uS5 family. As to quaternary structure, part of the 30S ribosomal subunit. Contacts proteins S4 and S8.

In terms of biological role, with S4 and S12 plays an important role in translational accuracy. Its function is as follows. Located at the back of the 30S subunit body where it stabilizes the conformation of the head with respect to the body. The chain is Small ribosomal subunit protein uS5 from Thermotoga maritima (strain ATCC 43589 / DSM 3109 / JCM 10099 / NBRC 100826 / MSB8).